We begin with the raw amino-acid sequence, 45 residues long: Osteocalcin (45 aa).

The region spanning alanine 1–glycine 44 is the Gla domain. Ca(2+) contacts are provided by glutamate 14, glutamate 18, glutamate 21, and glutamate 27. 4-carboxyglutamate occurs at positions 14, 18, and 21. A disulfide bridge links cysteine 20 with cysteine 26.

It belongs to the osteocalcin/matrix Gla protein family. Gamma-carboxyglutamate residues are formed by vitamin K dependent carboxylation by GGCX. These residues are essential for the binding of calcium.

It is found in the secreted. Its function is as follows. The carboxylated form is one of the main organic components of the bone matrix, which constitutes 1-2% of the total bone protein. The carboxylated form binds strongly to apatite and calcium. This is Osteocalcin (bglap) from Danio rerio (Zebrafish).